The following is a 305-amino-acid chain: UDP-3-O-acyl-N-acetylglucosamine deacetylase (305 aa).

3 residues coordinate Zn(2+): His-79, His-238, and Asp-242. The active-site Proton donor is the His-265.

The protein belongs to the LpxC family. Requires Zn(2+) as cofactor.

The enzyme catalyses a UDP-3-O-[(3R)-3-hydroxyacyl]-N-acetyl-alpha-D-glucosamine + H2O = a UDP-3-O-[(3R)-3-hydroxyacyl]-alpha-D-glucosamine + acetate. Its pathway is glycolipid biosynthesis; lipid IV(A) biosynthesis; lipid IV(A) from (3R)-3-hydroxytetradecanoyl-[acyl-carrier-protein] and UDP-N-acetyl-alpha-D-glucosamine: step 2/6. Its function is as follows. Catalyzes the hydrolysis of UDP-3-O-myristoyl-N-acetylglucosamine to form UDP-3-O-myristoylglucosamine and acetate, the committed step in lipid A biosynthesis. The protein is UDP-3-O-acyl-N-acetylglucosamine deacetylase of Shigella dysenteriae serotype 1 (strain Sd197).